Reading from the N-terminus, the 313-residue chain is Methionyl-tRNA formyltransferase (313 aa).

109 to 112 provides a ligand contact to (6S)-5,6,7,8-tetrahydrofolate; sequence SLLP.

The protein belongs to the Fmt family.

It carries out the reaction L-methionyl-tRNA(fMet) + (6R)-10-formyltetrahydrofolate = N-formyl-L-methionyl-tRNA(fMet) + (6S)-5,6,7,8-tetrahydrofolate + H(+). Its function is as follows. Attaches a formyl group to the free amino group of methionyl-tRNA(fMet). The formyl group appears to play a dual role in the initiator identity of N-formylmethionyl-tRNA by promoting its recognition by IF2 and preventing the misappropriation of this tRNA by the elongation apparatus. In Pelotomaculum thermopropionicum (strain DSM 13744 / JCM 10971 / SI), this protein is Methionyl-tRNA formyltransferase.